Reading from the N-terminus, the 338-residue chain is DNA-directed RNA polymerase subunit alpha (338 aa).

An alpha N-terminal domain (alpha-NTD) region spans residues 1–226 (MLIAQRPSLT…ELFGLARELN (226 aa)). An alpha C-terminal domain (alpha-CTD) region spans residues 243–338 (LAADLVMPIE…DAGFLETEHY (96 aa)).

Belongs to the RNA polymerase alpha chain family. Homodimer. The RNAP catalytic core consists of 2 alpha, 1 beta, 1 beta' and 1 omega subunit. When a sigma factor is associated with the core the holoenzyme is formed, which can initiate transcription.

The enzyme catalyses RNA(n) + a ribonucleoside 5'-triphosphate = RNA(n+1) + diphosphate. In terms of biological role, DNA-dependent RNA polymerase catalyzes the transcription of DNA into RNA using the four ribonucleoside triphosphates as substrates. This Streptomyces avermitilis (strain ATCC 31267 / DSM 46492 / JCM 5070 / NBRC 14893 / NCIMB 12804 / NRRL 8165 / MA-4680) protein is DNA-directed RNA polymerase subunit alpha.